A 551-amino-acid polypeptide reads, in one-letter code: MRSDVIKKGIERAPHRALFKAMGLTDEELDKPLIGIVNSFNELIPGHIHLRRIAEAVKTGVRMSGGTPLEFSTIGICDGIAMGHGGMKYSLPSRELIADSIEAVVRAYNFDGIVMIASCDKIIPGMLMAMARLDIPAIFISGGPMLPGRFKGEYVDVKTVFEAVGAVKAGKMSEKELKLLEDFACPGCGSCAGMFTANTMNALTEALGISLPWNGTAPAVYAHRIRIAKQTGMQIMKLVEEDLKPSDILTPEAFEDAIAVDMALGGSTNTVLHLMAIAREAGVKLTLDTFDEISEKTPTLVKISPAGKHFVLDLYEAGGVLAIMKRLSELGLIHEDRITVSLKTVGELLRDVSVLRDDVIRPVTRPYLSRGGLMILYGSLAPKGAVLKVSAIPDIETFEGEARVFDCEEDAVKAILSGDIEKGDVVVIRYEGPKGGPGMREMLAPTSAIAGMGLDRDVALVTDGRFSGATRGLSIGHVSPEAAEGGPIALVEDGDLIRIDVKAKRIDLLVDEEELKERKAKWKPKVKEVKGYLKRYSSLVTSANTGAVFRE.

Residue Asp-78 participates in Mg(2+) binding. A [2Fe-2S] cluster-binding site is contributed by Cys-119. 2 residues coordinate Mg(2+): Asp-120 and Lys-121. Lys-121 bears the N6-carboxylysine mark. Cys-191 is a binding site for [2Fe-2S] cluster. Glu-441 contacts Mg(2+). The Proton acceptor role is filled by Ser-467.

Belongs to the IlvD/Edd family. As to quaternary structure, homodimer. [2Fe-2S] cluster is required as a cofactor. Requires Mg(2+) as cofactor.

The catalysed reaction is (2R)-2,3-dihydroxy-3-methylbutanoate = 3-methyl-2-oxobutanoate + H2O. The enzyme catalyses (2R,3R)-2,3-dihydroxy-3-methylpentanoate = (S)-3-methyl-2-oxopentanoate + H2O. It functions in the pathway amino-acid biosynthesis; L-isoleucine biosynthesis; L-isoleucine from 2-oxobutanoate: step 3/4. Its pathway is amino-acid biosynthesis; L-valine biosynthesis; L-valine from pyruvate: step 3/4. Its function is as follows. Functions in the biosynthesis of branched-chain amino acids. Catalyzes the dehydration of (2R,3R)-2,3-dihydroxy-3-methylpentanoate (2,3-dihydroxy-3-methylvalerate) into 2-oxo-3-methylpentanoate (2-oxo-3-methylvalerate) and of (2R)-2,3-dihydroxy-3-methylbutanoate (2,3-dihydroxyisovalerate) into 2-oxo-3-methylbutanoate (2-oxoisovalerate), the penultimate precursor to L-isoleucine and L-valine, respectively. This is Dihydroxy-acid dehydratase from Pyrococcus abyssi (strain GE5 / Orsay).